Consider the following 950-residue polypeptide: A disintegrin and metalloproteinase with thrombospondin motifs 15 (950 aa).

The first 17 residues, 1–17 (MLLLGILTLAFAGRTAG), serve as a signal peptide directing secretion. Positions 18 to 212 (GSEPEREVVV…SRRRSGRAKR (195 aa)) are excised as a propeptide. Asn141 is a glycosylation site (N-linked (GlcNAc...) asparagine). Residues 151–172 (SQGAHLLQRRGVPGGPSGDPTS) are disordered. Residues 172–179 (SRCGVASG) carry the Cysteine switch motif. Cys174 is a binding site for Zn(2+). Residues 218 to 427 (RYVETLVVAD…GHGDCLLDQP (210 aa)) enclose the Peptidase M12B domain. Intrachain disulfides connect Cys293–Cys345, Cys322–Cys327, Cys339–Cys422, Cys377–Cys406, Cys448–Cys470, Cys459–Cys480, Cys465–Cys499, Cys493–Cys504, Cys528–Cys565, Cys532–Cys570, and Cys543–Cys555. His361 is a Zn(2+) binding site. The active site involves Glu362. Positions 365 and 371 each coordinate Zn(2+). The 88-residue stretch at 428–515 (SKPISLPEDL…ERHNLNKHRV (88 aa)) folds into the Disintegrin domain. The region spanning 516–571 (DGSWAKWDPYGPCSRTCGGGVQLARRQCTNPTPANGGKYCEGVRVKYRSCNLEPCP) is the TSP type-1 1 domain. Residues Asn591, Asn623, and Asn679 are each glycosylated (N-linked (GlcNAc...) asparagine). The tract at residues 701-838 (AIPAGASSID…SNQVEQPDDR (138 aa)) is spacer. The interval 798–822 (FYLPKEPREDKSSHPKDPRGPSVLH) is disordered. Basic and acidic residues predominate over residues 802-816 (KEPREDKSSHPKDPR). TSP type-1 domains lie at 839-895 (PPAR…EPCP) and 896-949 (TWEL…VLRP).

Requires Zn(2+) as cofactor. Post-translationally, the precursor is cleaved by a furin endopeptidase. Glycosylated. Can be O-fucosylated by POFUT2 on a serine or a threonine residue found within the consensus sequence C1-X(2)-(S/T)-C2-G of the TSP type-1 repeat domains where C1 and C2 are the first and second cysteine residue of the repeat, respectively. Fucosylated repeats can then be further glycosylated by the addition of a beta-1,3-glucose residue by the glucosyltransferase, B3GALTL. Fucosylation mediates the efficient secretion of ADAMTS family members. Can be C-glycosylated with one or two mannose molecules on tryptophan residues within the consensus sequence W-X-X-W of the TPRs. Also N-glycosylated. These other glycosylations can also facilitate secretion. Expressed in fetal liver and kidney, but not in any of the adult tissues examined.

The protein resides in the secreted. It localises to the extracellular space. Its subcellular location is the extracellular matrix. It is found in the cell surface. Its function is as follows. Metalloprotease which has proteolytic activity against the proteoglycan VCAN, cleaving it at the 'Glu-1428-|-1429-Ala' site. Cleaves VCAN in the pericellular matrix surrounding myoblasts, facilitating myoblast contact and fusion which is required for skeletal muscle development and regeneration. In Homo sapiens (Human), this protein is A disintegrin and metalloproteinase with thrombospondin motifs 15 (ADAMTS15).